The sequence spans 185 residues: Elongation factor P (185 aa).

This sequence belongs to the elongation factor P family.

It localises to the cytoplasm. The protein operates within protein biosynthesis; polypeptide chain elongation. Functionally, involved in peptide bond synthesis. Stimulates efficient translation and peptide-bond synthesis on native or reconstituted 70S ribosomes in vitro. Probably functions indirectly by altering the affinity of the ribosome for aminoacyl-tRNA, thus increasing their reactivity as acceptors for peptidyl transferase. This is Elongation factor P from Streptococcus pyogenes serotype M49 (strain NZ131).